We begin with the raw amino-acid sequence, 346 residues long: MSKRCASDRDDKDSEPVKKPRFSIANILDEVEDEEDVEVDVEDVDDVDLSSIPSKSPERSRGRPKIGLKMKEGNLPIECKLEGSELWAKFFDLGTEMIITKSGRRMFPTVKVSFTNVILDALYYIFLDVVPVDSKRYRYIYNKSAWLTAGKAEPVPKNRYYLHPDSPFTGDQLLKHVISFEKTKLTNNEVDKTGHLILNSMHKYQPRIHIVQRQKANPLDPNKVVMSEEKHCTYTFPETQFMAVTAYQNQLITKLKIEKNPFAKGFRDPTGRSPDEMERSPGDMMLSNFYHSSALQQAMFQQCLSKTLQLNPSIMMLYQNVFPTGNSLPAAPTVPGNPAEISIKSE.

A compositionally biased stretch (acidic residues) spans 33–48; it reads DEEDVEVDVEDVDDVD. Positions 33–66 are disordered; the sequence is DEEDVEVDVEDVDDVDLSSIPSKSPERSRGRPKI. A DNA-binding region (T-box) is located at residues 86–268; that stretch reads LWAKFFDLGT…KNPFAKGFRD (183 aa).

It localises to the nucleus. Its function is as follows. Transcription factor. Involved in cell fate determination; required to pattern the posterior hindgut. Involved in motor neuron fate determination and maintenance, acting as a transcriptional repressor to counteract gene activation by transcription factor unc-3 in a subset of motor neurons. Required throughout development to repress transcription by unc-3, probably acting by binding to specific promoter elements. Represses expression of VA and VB motor neuron-specific effector genes, such as DEG/ENaC channel del-1 and the innexin inx-12, in DA and DB motor neurons. Represses expression of transcription factor bnc-1, perhaps acting directly, in DA and DB motor neurons. This chain is T-box protein 12 (mab-9), found in Caenorhabditis elegans.